A 525-amino-acid chain; its full sequence is BTB/POZ domain-containing protein 2 (525 aa).

Residues 1-86 (MAAGGSGGRA…AEEAAGPGAA (86 aa)) are disordered. The segment covering 16–26 (VGVGPGTGGSP) has biased composition (gly residues). Positions 27-55 (GPSANAAATPAPGNAAAAAAAAAAAAAAP) are enriched in low complexity. Pro residues predominate over residues 56 to 65 (GPTPPAPPGP). Residues 66 to 86 (GTDAQAAGAERAEEAAGPGAA) are compositionally biased toward low complexity. The BTB domain occupies 117–187 (CDVHFLVGKG…LYSDEVQIGP (71 aa)).

As to quaternary structure, interacts with topoisomerase 1 and with TRIM5 isoform Delta.

The protein localises to the cytoplasm. This chain is BTB/POZ domain-containing protein 2 (BTBD2), found in Homo sapiens (Human).